The primary structure comprises 247 residues: Small ribosomal subunit protein uS3 (247 aa).

Positions 51 to 119 constitute a KH type-2 domain; sequence VAKRDKRPAG…ELHLNIVEIR (69 aa). The segment covering 224–233 has biased composition (basic and acidic residues); sequence PSAHDRRQQE. Positions 224-247 are disordered; it reads PSAHDRRQQELQESGGASRPRRDR.

The protein belongs to the universal ribosomal protein uS3 family. Part of the 30S ribosomal subunit. Forms a tight complex with proteins S10 and S14.

Functionally, binds the lower part of the 30S subunit head. Binds mRNA in the 70S ribosome, positioning it for translation. The sequence is that of Small ribosomal subunit protein uS3 from Jannaschia sp. (strain CCS1).